Reading from the N-terminus, the 356-residue chain is MKREILLERIDKLKQLMPWYVLEYYQSKLAVPYSFTTLYEYLKEYDRFFSWVLESGISNADKISDIPLSVLENMSKKDMESFILYLRERPLLNANTTKQGVSQTTINRTLSALSSLYKYLTEEVENDQGEPYFYRNVMKKVSTKKKKETLAARAENIKQKLFLGDETAGFLTYIDQEHPQQLSNRALSSFNKNKERDLAIIALLLASGVRLSEAVNLDLRDLNLKMMVIDVTRKGGKRDSVNVAAFAKPYLENYLAIRNQRYKTEKTDTALFLTLYRGVPNRIDASSVEKMVAKYSEDFKVRVTPHKLRHTLATRLYDATKSQVLVSHQLGHASTQVTDLYTHIVNDEQKNALDSL.

The region spanning 16 to 121 (LMPWYVLEYY…ALSSLYKYLT (106 aa)) is the Core-binding (CB) domain. Residues 169–354 (GFLTYIDQEH…VNDEQKNALD (186 aa)) form the Tyr recombinase domain. Catalysis depends on residues Arg210, Lys234, His306, Arg309, and His332. Residue Tyr341 is the O-(3'-phospho-DNA)-tyrosine intermediate of the active site.

This sequence belongs to the 'phage' integrase family. XerS subfamily.

It localises to the cytoplasm. With respect to regulation, ftsK is required for recombination. In terms of biological role, site-specific tyrosine recombinase, which acts by catalyzing the cutting and rejoining of the recombining DNA molecules. Essential to convert dimers of the bacterial chromosome into monomers to permit their segregation at cell division. This is Tyrosine recombinase XerS from Streptococcus pneumoniae (strain P1031).